The sequence spans 231 residues: Aquaporin Z (231 aa).

2 helical membrane-spanning segments follow: residues 9 to 29 (CFGT…AAGF) and 34 to 54 (IGFA…AFAV). The short motif at 63 to 65 (NPA) is the NPA 1 element. Helical transmembrane passes span 82–102 (VGYV…LYLI), 129–149 (YSML…LLVI), and 156–176 (FAPA…IHLI). The NPA 2 signature appears at 186-188 (NPA). The chain crosses the membrane as a helical span at residues 202–222 (LEQLWFFWVVPIVGGIIGGLI).

The protein belongs to the MIP/aquaporin (TC 1.A.8) family. In terms of assembly, homotetramer.

It is found in the cell inner membrane. It carries out the reaction H2O(in) = H2O(out). In terms of biological role, channel that permits osmotically driven movement of water in both directions. It is involved in the osmoregulation and in the maintenance of cell turgor during volume expansion in rapidly growing cells. It mediates rapid entry or exit of water in response to abrupt changes in osmolarity. The sequence is that of Aquaporin Z from Escherichia coli O157:H7.